The primary structure comprises 699 residues: MAREYKIEDYRNFGIMAHIDAGKTTTTERILYYTGKSHKIGEVHDGAATMDWMEQEQERGITITSAATTTFWKGRDGKMRRFNIIDTPGHVDFTIEVERSLRVLDGAIALLDANAGVEPQTETVWRQAEKYNVPRMIFCNKMDKTGADFYRSVEMIKTRLGATAVVMQLPIGAESDFKGVVDLVEMNALIWRDESLGAQWDVVEIPDDLKAKAEEYREKLIETVVEIDEAAMEAYLEGNMPDNDKIRELVRRGTIDVKFHPMFCGTAFKNKGVQPLLDAVVDYLPSPLDIPAIKGIDFKTEADIERHADDAEPLSMLAFKIMNDPFVGSLTFARIYSGKLEKGSSVLNTVKDKRERVGRMLQMHSNSREDIEEAFAGDIVALAGLKETTTGDTLCDPLKPVILERMEFPEPVIQIAIEPKSKGDQEKMGLALNRLAAEDPSFRVKTDQESGQTIIAGMGELHLDIIVDRMRREFKVEANVGAPQVAYRETITRQTEEDYTHKKQTGGTGQFARVKIIFEPNPEGEDFKFESKIVGGAVPKEYIPGVQKGIESVLSSGPLAGFPMLGVKATLIDGAFHDVDSSVLAFEIASRACFREAAKKAGAQLLEPMMKVEVVTPEDYVGDVIGDLNSRRGQIQGQESRGIAVVISANVPLANMFKYVDNLRSMSQGRAQYTMTFDHYAPVPSNVATEIQAKYSGQK.

One can recognise a tr-type G domain in the interval Glu-8–Leu-288. Residues Ala-17–Thr-24, Asp-86–His-90, and Asn-140–Asp-143 contribute to the GTP site.

The protein belongs to the TRAFAC class translation factor GTPase superfamily. Classic translation factor GTPase family. EF-G/EF-2 subfamily.

The protein resides in the cytoplasm. Functionally, catalyzes the GTP-dependent ribosomal translocation step during translation elongation. During this step, the ribosome changes from the pre-translocational (PRE) to the post-translocational (POST) state as the newly formed A-site-bound peptidyl-tRNA and P-site-bound deacylated tRNA move to the P and E sites, respectively. Catalyzes the coordinated movement of the two tRNA molecules, the mRNA and conformational changes in the ribosome. This Rhizobium etli (strain ATCC 51251 / DSM 11541 / JCM 21823 / NBRC 15573 / CFN 42) protein is Elongation factor G.